Consider the following 365-residue polypeptide: Cyclin-O protein B (365 aa).

The tract at residues 22-64 is disordered; that stretch reads SGKRKRDSVYSPGDATPGDRGEGEPKCPSVGTKKRAKYSRHRK. The segment covering 53–64 has biased composition (basic residues); it reads TKKRAKYSRHRK.

This sequence belongs to the cyclin family.

It is found in the cytoplasm. Specifically required for generation of multiciliated cells, possibly by promoting a cell cycle state compatible with centriole amplification and maturation. Acts downstream of mcidas to promote mother centriole amplification and maturation in preparation for apical docking. This is Cyclin-O protein B (ccno-b) from Xenopus laevis (African clawed frog).